Reading from the N-terminus, the 274-residue chain is Cytochrome b-c1 complex subunit Rieske, mitochondrial (274 aa).

Residues 79-103 (SHTDVKVPDFYDYRRLEVLDSTKSS) are Mitochondrial matrix-facing. A helical membrane pass occupies residues 104 to 140 (RESSEARKGFSYLVTAVTTVGVAYAAKNAVTQFISSM). The Mitochondrial intermembrane segment spans residues 141–274 (SASADVLAMA…FTSDDMVVVG (134 aa)). In terms of domain architecture, Rieske spans 187 to 272 (EAAVELSQLR…YEFTSDDMVV (86 aa)). Positions 217, 219, 236, 239, and 241 each coordinate [2Fe-2S] cluster. Cysteines 222 and 238 form a disulfide.

Belongs to the Rieske iron-sulfur protein family. Component of the ubiquinol-cytochrome c oxidoreductase (cytochrome b-c1 complex, complex III, CIII), a multisubunit enzyme composed of 11 subunits. The complex is composed of 3 respiratory subunits cytochrome b, cytochrome c1 and Rieske protein UQCRFS1, 2 core protein subunits UQCRC1/QCR1 and UQCRC2/QCR2, and 6 low-molecular weight protein subunits UQCRH/QCR6, UQCRB/QCR7, UQCRQ/QCR8, UQCR10/QCR9, UQCR11/QCR10 and subunit 9, the cleavage product of Rieske protein UQCRFS1. The complex exists as an obligatory dimer and forms supercomplexes (SCs) in the inner mitochondrial membrane with NADH-ubiquinone oxidoreductase (complex I, CI) and cytochrome c oxidase (complex IV, CIV), resulting in different assemblies (supercomplex SCI(1)III(2)IV(1) and megacomplex MCI(2)III(2)IV(2)). Incorporation of the Rieske protein UQCRFS1 is the penultimate step in complex III assembly. Interacts with TTC19, which is involved in the clearance of UQCRFS1 fragments. As to quaternary structure, component of the ubiquinol-cytochrome c oxidoreductase (cytochrome b-c1 complex, complex III, CIII). Subunit 9 corresponds to the mitochondrial targeting sequence (MTS) of Rieske protein UQCRFS1. It is retained after processing and incorporated inside complex III, where it remains bound to the complex and localizes between the 2 core subunits UQCRC1/QCR1 and UQCRC2/QCR2. The cofactor is [2Fe-2S] cluster. Proteolytic processing is necessary for the correct insertion of UQCRFS1 in the complex III dimer. Several fragments are generated during UQCRFS1 insertion, most probably due to the endogenous matrix-processing peptidase (MPP) activity of the 2 core protein subunits UQCRC1/QCR1 and UQCRC2/QCR2, which are homologous to the 2 mitochondrial-processing peptidase (MPP) subunits beta-MPP and alpha-MPP respectively. The action of the protease is also necessary for the clearance of the UQCRFS1 fragments.

The protein localises to the mitochondrion inner membrane. The enzyme catalyses a quinol + 2 Fe(III)-[cytochrome c](out) = a quinone + 2 Fe(II)-[cytochrome c](out) + 2 H(+)(out). Its function is as follows. Component of the ubiquinol-cytochrome c oxidoreductase, a multisubunit transmembrane complex that is part of the mitochondrial electron transport chain which drives oxidative phosphorylation. The respiratory chain contains 3 multisubunit complexes succinate dehydrogenase (complex II, CII), ubiquinol-cytochrome c oxidoreductase (cytochrome b-c1 complex, complex III, CIII) and cytochrome c oxidase (complex IV, CIV), that cooperate to transfer electrons derived from NADH and succinate to molecular oxygen, creating an electrochemical gradient over the inner membrane that drives transmembrane transport and the ATP synthase. The cytochrome b-c1 complex catalyzes electron transfer from ubiquinol to cytochrome c, linking this redox reaction to translocation of protons across the mitochondrial inner membrane, with protons being carried across the membrane as hydrogens on the quinol. In the process called Q cycle, 2 protons are consumed from the matrix, 4 protons are released into the intermembrane space and 2 electrons are passed to cytochrome c. The Rieske protein is a catalytic core subunit containing a [2Fe-2S] iron-sulfur cluster. It cycles between 2 conformational states during catalysis to transfer electrons from the quinol bound in the Q(0) site in cytochrome b to cytochrome c1. Incorporation of UQCRFS1 is the penultimate step in complex III assembly. In terms of biological role, component of the ubiquinol-cytochrome c oxidoreductase (cytochrome b-c1 complex, complex III, CIII). UQCRFS1 undergoes proteolytic processing once it is incorporated in the complex III dimer. One of the fragments, called subunit 9, corresponds to its mitochondrial targeting sequence (MTS). The proteolytic processing is necessary for the correct insertion of UQCRFS1 in the complex III dimer, but the persistence of UQCRFS1-derived fragments may prevent newly imported UQCRFS1 to be processed and assembled into complex III and is detrimental for the complex III structure and function. The sequence is that of Cytochrome b-c1 complex subunit Rieske, mitochondrial (UQCRFS1) from Theropithecus gelada (Gelada baboon).